A 117-amino-acid polypeptide reads, in one-letter code: Phosphoribosyl-ATP pyrophosphatase (117 aa).

The protein belongs to the PRA-PH family.

It is found in the cytoplasm. It catalyses the reaction 1-(5-phospho-beta-D-ribosyl)-ATP + H2O = 1-(5-phospho-beta-D-ribosyl)-5'-AMP + diphosphate + H(+). It participates in amino-acid biosynthesis; L-histidine biosynthesis; L-histidine from 5-phospho-alpha-D-ribose 1-diphosphate: step 2/9. The polypeptide is Phosphoribosyl-ATP pyrophosphatase (Rhodospirillum rubrum (strain ATCC 11170 / ATH 1.1.1 / DSM 467 / LMG 4362 / NCIMB 8255 / S1)).